A 2298-amino-acid polypeptide reads, in one-letter code: Non-reducing polyketide synthase pgmA (2298 aa).

The interval 8–333 (LFIFGDQTLD…IYNVLKQSPL (326 aa)) is N-terminal acylcarrier protein transacylase domain (SAT). Positions 336-361 (YLSSKPAQSRQPVSNEGAPEPGNGRQ) are disordered. Polar residues predominate over residues 340 to 349 (KPAQSRQPVS). A Ketosynthase family 3 (KS3) domain is found at 360-798 (RQKLAIIGMS…GGNSALLVED (439 aa)). Active-site for beta-ketoacyl synthase activity residues include C532, H667, and H714. The acyl/malonyl transferases stretch occupies residues 901-1193 (VFAFTGQGAH…GMVKGVLGPQ (293 aa)). S994 acts as the For acyl/malonyl transferase activity in catalysis. The N-terminal hotdog fold stretch occupies residues 1283-1415 (HRVVEETHDS…CVVRFRDRGL (133 aa)). The 307-residue stretch at 1283–1589 (HRVVEETHDS…IQGVPRRVLK (307 aa)) folds into the PKS/mFAS DH domain. Residues 1294 to 1586 (KTRIVIEADI…QISIQGVPRR (293 aa)) form a product template (PT) domainn region. H1315 serves as the catalytic Proton acceptor; for dehydratase activity. The tract at residues 1438–1589 (VTGETARFNR…IQGVPRRVLK (152 aa)) is C-terminal hotdog fold. D1502 acts as the Proton donor; for dehydratase activity in catalysis. Residues 1619–1642 (YPVANGHAQATPTSGPVNGEPRPS) form a disordered region. Residues 1641–1716 (PSRFPRALEI…SLRALLSEPE (76 aa)) form the Carrier 1 domain. At S1675 the chain carries O-(pantetheine 4'-phosphoryl)serine. The segment at 1716–1762 (ERSTNGMPAASAKDTSRFDEIPPMNGHKTNGHVMNGHSNGSSNGLPD) is disordered. A compositionally biased stretch (polar residues) spans 1751 to 1760 (GHSNGSSNGL). The 76-residue stretch at 1765–1840 (KVDFQRVLQI…DLKRYLFPQD (76 aa)) folds into the Carrier 2 domain. S1799 carries the post-translational modification O-(pantetheine 4'-phosphoryl)serine. The interval 1927-2178 (VTGASGSLGG…YWTPVEEVAG (252 aa)) is reductase (R) domain.

The protein operates within pigment biosynthesis. Its pathway is secondary metabolite biosynthesis. Non-reducing polyketide synthase; part of the gene cluster that mediates the biosynthesis of pleosporalin A, ascomycone A, as well as a third cryptic naphthoquinone derived pigment, all responsible for the coloration of conidia. The non-reducing polyketide synthase pgmA is responsible for the condensation of seven acetyl-CoA units to produce the cyclized heptaketide 3-acetonyl-1,6,8-trihydroxy-2-naphthaldehyde. The pathway begins with the biosynthesis of the cyclized heptaketide 3-acetonyl-1,6,8-trihydroxy-2-naphthaldehyde by the NR-PKS pgmA. The C-6 hydroxyl group is further methylated by the O-methyltransferase pgmB to yield fusarubinaldehyde which is in turn oxidized by the cytochrome P450 monooxygenase pgmC at C-9. The C-1 hydroxyl group is then methylated spontaneously. Although pgmE, pgmD and pgmH are essential for the production of pleosporalin A, it is not the case for the 2 other final products and it remains difficult to assign a specific function to each enzyme. PgmF and pgmG seem not to be involved in pigment biosynthesis although they were regulated by the cluster-specific transcription factor pgmR. In Aspergillus terreus (strain NIH 2624 / FGSC A1156), this protein is Non-reducing polyketide synthase pgmA.